The following is a 33-amino-acid chain: U-limacoditoxin(13)-As11 (33 aa).

The N-terminal stretch at 1–19 (MFKLLLVLALTMLAQSALA) is a signal peptide. Phe-32 bears the Phenylalanine amide mark.

This sequence belongs to the FARP (FMRFamide related peptide) family. In terms of tissue distribution, expressed by the venom secretory cell of the spine. The spine is a cuticular structure containing a single large nucleated venom-secreting cell at its base. It is an independent unit capable of producing, storing and injecting venom. On the back of A.stimulea caterpillars, spines are grouped together by 50 to 100 to form scoli, of which there are eight.

It is found in the secreted. Its function is as follows. Is toxic when injected into Drosophila melanogaster. Also shows a low anthelmintic activity against the parasitic nematode H.contortus (drug susceptible Kirby isolate). The sequence is that of U-limacoditoxin(13)-As11 from Acharia stimulea (Saddleback caterpillar moth).